The primary structure comprises 179 residues: Protein Syd (179 aa).

This sequence belongs to the Syd family.

Its subcellular location is the cell inner membrane. Interacts with the SecY protein in vivo. May bind preferentially to an uncomplexed state of SecY, thus functioning either as a chelating agent for excess SecY in the cell or as a regulatory factor that negatively controls the translocase function. In Pseudoalteromonas translucida (strain TAC 125), this protein is Protein Syd.